The sequence spans 163 residues: Cyanate hydratase (163 aa).

Residues R103, E106, and S129 contribute to the active site.

It belongs to the cyanase family.

It catalyses the reaction cyanate + hydrogencarbonate + 3 H(+) = NH4(+) + 2 CO2. In terms of biological role, catalyzes the reaction of cyanate with bicarbonate to produce ammonia and carbon dioxide. The sequence is that of Cyanate hydratase from Ajellomyces capsulatus (strain H143) (Darling's disease fungus).